Consider the following 200-residue polypeptide: Protein Syd (200 aa).

Belongs to the Syd family.

It is found in the cell inner membrane. Its function is as follows. Interacts with the SecY protein in vivo. May bind preferentially to an uncomplexed state of SecY, thus functioning either as a chelating agent for excess SecY in the cell or as a regulatory factor that negatively controls the translocase function. In Colwellia psychrerythraea (strain 34H / ATCC BAA-681) (Vibrio psychroerythus), this protein is Protein Syd.